Consider the following 316-residue polypeptide: Beta-ketoacyl-[acyl-carrier-protein] synthase III 1 (316 aa).

Active-site residues include Cys-112 and His-243. The ACP-binding stretch occupies residues Gln-244–Arg-248. The active site involves Asn-273.

Belongs to the thiolase-like superfamily. FabH family. In terms of assembly, homodimer.

The protein localises to the cytoplasm. The enzyme catalyses malonyl-[ACP] + acetyl-CoA + H(+) = 3-oxobutanoyl-[ACP] + CO2 + CoA. The protein operates within lipid metabolism; fatty acid biosynthesis. Catalyzes the condensation reaction of fatty acid synthesis by the addition to an acyl acceptor of two carbons from malonyl-ACP. Catalyzes the first condensation reaction which initiates fatty acid synthesis and may therefore play a role in governing the total rate of fatty acid production. Possesses both acetoacetyl-ACP synthase and acetyl transacylase activities. Its substrate specificity determines the biosynthesis of branched-chain and/or straight-chain of fatty acids. The polypeptide is Beta-ketoacyl-[acyl-carrier-protein] synthase III 1 (Vibrio vulnificus (strain YJ016)).